An 874-amino-acid polypeptide reads, in one-letter code: Coatomer subunit gamma-1 (874 aa).

Positions 1–11 are enriched in basic and acidic residues; it reads MLKKFDKKDEE. Residues 1–21 form a disordered region; the sequence is MLKKFDKKDEESGGGSNPFQH. 4 HEAT repeats span residues 64 to 101, 283 to 320, 322 to 355, and 356 to 392; these read TEAT…IAED, KELA…KHPS, VTAC…GSES, and SIDR…KYPR. Thr-594 carries the phosphothreonine modification. The segment at 609–874 is interaction with ZNF289/ARFGAP2; that stretch reads RQEIFQEQLA…PVDIILASVG (266 aa).

It belongs to the COPG family. Oligomeric complex that consists of at least the alpha, beta, beta', gamma, delta, epsilon and zeta subunits. Interacts with ZNF289/ARFGAP2 through its C-terminal appendage domain. Interacts with EGFR upon EGF treatment; interaction is essential for regulation of EGF-dependent nuclear transport of EGFR by retrograde trafficking from the Golgi to the ER. The coatomer interacts with KDEL receptors; the interaction is important for retrograde trafficking of KDEL-bearing proteins from the Golgi to the endoplasmic reticulum. Interacts with COPB1. Interacts with TMED10 (via C-terminus). Interacts with TMED2, TMED3, TMED7 and TMED9.

It localises to the cytoplasm. It is found in the golgi apparatus membrane. The protein resides in the cytoplasmic vesicle. The protein localises to the COPI-coated vesicle membrane. The coatomer is a cytosolic protein complex that binds to dilysine motifs and reversibly associates with Golgi non-clathrin-coated vesicles, which further mediate biosynthetic protein transport from the ER, via the Golgi up to the trans Golgi network. Coatomer complex is required for budding from Golgi membranes, and is essential for the retrograde Golgi-to-ER transport of dilysine-tagged proteins. In mammals, the coatomer can only be recruited by membranes associated to ADP-ribosylation factors (ARFs), which are small GTP-binding proteins; the complex also influences the Golgi structural integrity, as well as the processing, activity, and endocytic recycling of LDL receptors. Required for limiting lipid storage in lipid droplets. Involved in lipid homeostasis by regulating the presence of perilipin family members PLIN2 and PLIN3 at the lipid droplet surface and promoting the association of adipocyte triglyceride lipase (PNPLA2) with the lipid droplet surface to mediate lipolysis. This is Coatomer subunit gamma-1 (COPG1) from Homo sapiens (Human).